A 753-amino-acid polypeptide reads, in one-letter code: 5-methyltetrahydropteroyltriglutamate--homocysteine methyltransferase (753 aa).

5-methyltetrahydropteroyltri-L-glutamate-binding positions include 17–20 (RELK) and K117. Residues 431–433 (IGS) and E484 each bind L-homocysteine. Residues 431–433 (IGS) and E484 contribute to the L-methionine site. 5-methyltetrahydropteroyltri-L-glutamate is bound by residues 515-516 (RC) and W561. Position 599 (D599) interacts with L-homocysteine. D599 contributes to the L-methionine binding site. E605 contributes to the 5-methyltetrahydropteroyltri-L-glutamate binding site. The Zn(2+) site is built by H641, C643, and E665. The active-site Proton donor is the H694. Residue C726 coordinates Zn(2+).

The protein belongs to the vitamin-B12 independent methionine synthase family. It depends on Zn(2+) as a cofactor.

It carries out the reaction 5-methyltetrahydropteroyltri-L-glutamate + L-homocysteine = tetrahydropteroyltri-L-glutamate + L-methionine. It functions in the pathway amino-acid biosynthesis; L-methionine biosynthesis via de novo pathway; L-methionine from L-homocysteine (MetE route): step 1/1. Its function is as follows. Catalyzes the transfer of a methyl group from 5-methyltetrahydrofolate to homocysteine resulting in methionine formation. This Escherichia coli (strain UTI89 / UPEC) protein is 5-methyltetrahydropteroyltriglutamate--homocysteine methyltransferase.